The primary structure comprises 300 residues: Probable acetyltransferase Rv3034c (300 aa).

Positions 1-25 (MNVLSLGSSSGVVWGRVPITAPAGA) are cleaved as a signal peptide.

This sequence belongs to the transferase hexapeptide repeat family.

Functionally, may be involved in the biosynthesis of 6-O-methylglucosyl-containing lipopolysaccharides (MGLP). Regulates host peroxisome homeostasis in response to intracellular redox levels to favor mycobacterial infection in macrophage. Induces the expression of host peroxisome biogenesis and proliferation factors as well as peroxisome associated enzymes. Inhibits the induction of host pexophagy mechanism by down-regulating the expression of pexophagy associated proteins and adapter molecules in infected macrophages. However, during increased oxidative stress conditions, it induces degradation of dysfunctional and damaged peroxisomes. Regulation of peroxisome biogenesis and degradation is dependent upon host p-mTORC1 mediated signaling pathway. This is Probable acetyltransferase Rv3034c from Mycobacterium tuberculosis (strain ATCC 25618 / H37Rv).